Reading from the N-terminus, the 292-residue chain is AhcY transcriptional activator HvrB (292 aa).

Residues 10–67 (PPLTALRAFAATASEGGFSAAARKLNVTHAAIAQQVRALEADLDVPLVWRDGKHLHLT) enclose the HTH lysR-type domain. Positions 27-46 (FSAAARKLNVTHAAIAQQVR) form a DNA-binding region, H-T-H motif.

It belongs to the LysR transcriptional regulatory family.

Functions as a low-light activator of ahcY expression (gene for S-adenosyl-L-homocysteine hydrolase) and as a high-light activator of an uncharacterized 21.6 kDa protein in the ahcY-hvrB intergenic region (orf5). It is also a negative regulator of its own expression. The sequence is that of AhcY transcriptional activator HvrB (hvrB) from Rhodobacter capsulatus (strain ATCC BAA-309 / NBRC 16581 / SB1003).